A 249-amino-acid polypeptide reads, in one-letter code: ATP synthase subunits region ORF 6 (249 aa).

In Fuscovulum blasticum (Rhodobacter blasticus), this protein is ATP synthase subunits region ORF 6.